Here is a 124-residue protein sequence, read N- to C-terminus: MRKPIEHTADIAYEISGNSYEELLEEARNILLEEEGIVLDTEEKEKMYPLEETEDAFFDTVNDWILEISKGWAPWRIKREGNELKVTFRKIRKKEGTEIKALTYHLLKFERDGDVLKTKVVFDT.

4 residues coordinate Ca(2+): histidine 7, aspartate 10, aspartate 123, and threonine 124.

The protein belongs to the archease family.

Activates the tRNA-splicing ligase complex by facilitating the enzymatic turnover of catalytic subunit RtcB. Acts by promoting the guanylylation of RtcB, a key intermediate step in tRNA ligation. Can also alter the NTP specificity of RtcB such that ATP, dGTP or ITP is used efficiently. May also act as a chaperone or modulator of proteins involved in DNA or RNA processing. This is Protein archease from Thermotoga maritima (strain ATCC 43589 / DSM 3109 / JCM 10099 / NBRC 100826 / MSB8).